The chain runs to 77 residues: Translation initiation factor IF-1, chloroplastic (77 aa).

An S1-like domain is found at 1–71; the sequence is MKEQKWIHEG…TRGRIIYRLR (71 aa).

This sequence belongs to the IF-1 family. Component of the 30S ribosomal translation pre-initiation complex which assembles on the 30S ribosome in the order IF-2 and IF-3, IF-1 and N-formylmethionyl-tRNA(fMet); mRNA recruitment can occur at any time during PIC assembly.

It localises to the plastid. Its subcellular location is the chloroplast. Its function is as follows. One of the essential components for the initiation of protein synthesis. Stabilizes the binding of IF-2 and IF-3 on the 30S subunit to which N-formylmethionyl-tRNA(fMet) subsequently binds. Helps modulate mRNA selection, yielding the 30S pre-initiation complex (PIC). Upon addition of the 50S ribosomal subunit IF-1, IF-2 and IF-3 are released leaving the mature 70S translation initiation complex. This chain is Translation initiation factor IF-1, chloroplastic, found in Daucus carota (Wild carrot).